Here is a 101-residue protein sequence, read N- to C-terminus: Urease subunit beta (101 aa).

Belongs to the urease beta subunit family. As to quaternary structure, heterotrimer of UreA (gamma), UreB (beta) and UreC (alpha) subunits. Three heterotrimers associate to form the active enzyme.

Its subcellular location is the cytoplasm. The enzyme catalyses urea + 2 H2O + H(+) = hydrogencarbonate + 2 NH4(+). It participates in nitrogen metabolism; urea degradation; CO(2) and NH(3) from urea (urease route): step 1/1. The chain is Urease subunit beta from Paraburkholderia phytofirmans (strain DSM 17436 / LMG 22146 / PsJN) (Burkholderia phytofirmans).